Here is a 209-residue protein sequence, read N- to C-terminus: Cytidylyl-2-hydroxypropylphosphonate hydrolase (209 aa).

4 residues coordinate a divalent metal cation: N111, D127, E129, and D131. The active-site Proton donor is K144. D145 is a binding site for a divalent metal cation.

The protein belongs to the FomD family. In terms of assembly, monomer in solution. It depends on Mn(2+) as a cofactor. Requires Co(2+) as cofactor.

The enzyme catalyses cytidine 5'-({hydroxy[(S)-2-hydroxypropyl]phosphonoyl}phosphate) + H2O = (S)-2-hydroxypropylphosphonate + CMP + H(+). It participates in antibiotic biosynthesis; fosfomycin biosynthesis. Hydrolysis of (S)-HPP-CMP is inhibited by CDP. In terms of biological role, involved in fosfomycin biosynthesis. Catalyzes the hydrolysis of cytidylyl (S)-2-hydroxypropylphosphonate ((S)-HPP-CMP) to give (S)-2-hydroxypropylphosphonate ((S)-HPP) and CMP. Can also hydrolyze (R)-HPP-CMP and cytidylyl 2-hydroxyethylphosphonate (HEP-CMP), which is a biosynthetic intermediate before C-methylation, but the catalytic efficiency is much higher with (S)-HPP-CMP. This chain is Cytidylyl-2-hydroxypropylphosphonate hydrolase, found in Streptomyces wedmorensis.